We begin with the raw amino-acid sequence, 229 residues long: uncharacterized protein (229 aa).

22-29 (GMIAFGKT) serves as a coordination point for ATP.

This is an uncharacterized protein from Mycoplasma pneumoniae (strain ATCC 29342 / M129 / Subtype 1) (Mycoplasmoides pneumoniae).